Reading from the N-terminus, the 635-residue chain is Histone-lysine N-methyltransferase Su(var)3-9 (635 aa).

The interval 81–188 is binds to Su(var)205 and Suvar(3)7; it reads ERLSEKKIKN…LNGFAKLKRR (108 aa). Disordered stretches follow at residues 123–161 and 191–210; these read RLCT…NSSG and SCVG…MGVI. 2 stretches are compositionally biased toward low complexity: residues 128 to 139 and 147 to 161; these read PASSSMPASTSS and RSTS…NSSG. A Chromo domain is found at 219–278; sequence YVVERIECVEMDQYQPVFFVKWLGYHDSENTWESLANVADCAEMEKFVERHQQLYETYIA. The Pre-SET domain occupies 410 to 474; sequence VGCKCTEDTE…SCSNRLVQHG (65 aa). Zn(2+)-binding residues include Cys-412, Cys-414, Cys-421, Cys-427, Cys-428, Cys-456, Cys-460, Cys-462, and Cys-466. Residues 477-603 form the SET domain; the sequence is VPLVLFKTAN…AGEELSFDYI (127 aa). S-adenosyl-L-methionine-binding positions include 488-490, Tyr-531, and 560-561; these read SGW and NH. Cys-563, Cys-623, Cys-625, and Cys-630 together coordinate Zn(2+). Residues 619–635 form the Post-SET domain; it reads VRVECRCGRDNCRKVLF.

This sequence belongs to the class V-like SAM-binding methyltransferase superfamily. Histone-lysine methyltransferase family. Suvar3-9 subfamily. In terms of assembly, interacts with Su(var)205 and Su(var)3-7. Probably associates with HDAC1/Rpd3. Interacts with Rrp6; the interaction promotes association of Rrp6 with a subset of genomic loci.

It is found in the nucleus. The protein resides in the chromosome. It localises to the centromere. The catalysed reaction is L-lysyl(9)-[histone H3] + 3 S-adenosyl-L-methionine = N(6),N(6),N(6)-trimethyl-L-lysyl(9)-[histone H3] + 3 S-adenosyl-L-homocysteine + 3 H(+). Its function is as follows. Histone methyltransferase that specifically trimethylates 'Lys-9' of histone H3 using monomethylated H3 'Lys-9' as substrate. H3 'Lys-9' trimethylation represents a specific tag for epigenetic transcriptional repression by recruiting Su(var)205/HP1 to methylated histones. Mainly functions in heterochromatin regions, thereby playing a central role in the establishment of constitutive heterochromatin at pericentric regions. Involved in heterochromatic gene silencing including the modification of position-effect-variegation. The chain is Histone-lysine N-methyltransferase Su(var)3-9 (Su(var)3-9) from Drosophila melanogaster (Fruit fly).